The chain runs to 232 residues: MGQKVHPNGIRLGIVKAWNSTWYANTKEFADNLDSDFKVRQFLTKELAKASVSRIVIERPAKSIRVTIHTARPGIVIGKKGEDVEKLRKVVADIAGVPAQINIAEVRKPELDAKLVADSIISQLERRVMFRRAMKRAVQNAMRLGAKGIKVEVSGRLGGAEIARTEWYREGRVPLHTLRADIDYNTSEAHTTYGVIGVKVWIFKGEILGGMAAVEQPEPAAQPKKQQRKGRK.

The KH type-2 domain maps to 39 to 107 (VRQFLTKELA…PAQINIAEVR (69 aa)).

This sequence belongs to the universal ribosomal protein uS3 family. In terms of assembly, part of the 30S ribosomal subunit. Forms a tight complex with proteins S10 and S14.

In terms of biological role, binds the lower part of the 30S subunit head. Binds mRNA in the 70S ribosome, positioning it for translation. This chain is Small ribosomal subunit protein uS3, found in Yersinia pestis bv. Antiqua (strain Antiqua).